Consider the following 363-residue polypeptide: Phosphoserine aminotransferase (363 aa).

Arginine 42 provides a ligand contact to L-glutamate. Residues 76–77 (GR), tryptophan 102, threonine 156, aspartate 175, and glutamine 198 contribute to the pyridoxal 5'-phosphate site. Position 199 is an N6-(pyridoxal phosphate)lysine (lysine 199). 240–241 (NT) lines the pyridoxal 5'-phosphate pocket.

Belongs to the class-V pyridoxal-phosphate-dependent aminotransferase family. SerC subfamily. Homodimer. The cofactor is pyridoxal 5'-phosphate.

Its subcellular location is the cytoplasm. The catalysed reaction is O-phospho-L-serine + 2-oxoglutarate = 3-phosphooxypyruvate + L-glutamate. The enzyme catalyses 4-(phosphooxy)-L-threonine + 2-oxoglutarate = (R)-3-hydroxy-2-oxo-4-phosphooxybutanoate + L-glutamate. The protein operates within amino-acid biosynthesis; L-serine biosynthesis; L-serine from 3-phospho-D-glycerate: step 2/3. It functions in the pathway cofactor biosynthesis; pyridoxine 5'-phosphate biosynthesis; pyridoxine 5'-phosphate from D-erythrose 4-phosphate: step 3/5. Catalyzes the reversible conversion of 3-phosphohydroxypyruvate to phosphoserine and of 3-hydroxy-2-oxo-4-phosphonooxybutanoate to phosphohydroxythreonine. The protein is Phosphoserine aminotransferase of Shewanella denitrificans (strain OS217 / ATCC BAA-1090 / DSM 15013).